The following is a 449-amino-acid chain: Na(+)-translocating NADH-quinone reductase subunit A (449 aa).

Belongs to the NqrA family. In terms of assembly, composed of six subunits; NqrA, NqrB, NqrC, NqrD, NqrE and NqrF.

It catalyses the reaction a ubiquinone + n Na(+)(in) + NADH + H(+) = a ubiquinol + n Na(+)(out) + NAD(+). Its function is as follows. NQR complex catalyzes the reduction of ubiquinone-1 to ubiquinol by two successive reactions, coupled with the transport of Na(+) ions from the cytoplasm to the periplasm. NqrA to NqrE are probably involved in the second step, the conversion of ubisemiquinone to ubiquinol. This Actinobacillus pleuropneumoniae serotype 5b (strain L20) protein is Na(+)-translocating NADH-quinone reductase subunit A.